The sequence spans 292 residues: GTP cyclohydrolase FolE2 (292 aa).

This sequence belongs to the GTP cyclohydrolase IV family.

The enzyme catalyses GTP + H2O = 7,8-dihydroneopterin 3'-triphosphate + formate + H(+). It functions in the pathway cofactor biosynthesis; 7,8-dihydroneopterin triphosphate biosynthesis; 7,8-dihydroneopterin triphosphate from GTP: step 1/1. Its function is as follows. Converts GTP to 7,8-dihydroneopterin triphosphate. The protein is GTP cyclohydrolase FolE2 of Macrococcus caseolyticus (strain JCSC5402) (Macrococcoides caseolyticum).